A 353-amino-acid chain; its full sequence is MTIALGRFTKEENDLFDIMDDWLRRDRFVFVGWSGLLLFPCAYFALGGWFTGTTFVTSWYTHGLASSYLEGCNFLTAAVSTPANSLAHSLLLLWGPEAQGDFTRWCQLGGLWTFVALHGAFGLIGFMLRQFELARSVQLRPYNAIAFSGPIAVFVSVFLIYPLGQSGWFFAPSFGVAAIFRFILFFQGFHNWTLNPFHMMGVAGVLGAALLCAIHGATVENTLFEDGDGANTFRAFNPTQAEETYSMVTANRFWSQIFGVAFSNKRWLHFFMLFVPVTGLWMSALGVVGLALNLRAYDFVSQEIRAAEDPEFETFYTKNILLNEGIRAWMAAQDQPHENLIFPEEVLPRGNAL.

Threonine 2 is subject to N-acetylthreonine. Threonine 2 is modified (phosphothreonine). Residues 41 to 61 (CAYFALGGWFTGTTFVTSWYT) form a helical membrane-spanning segment. Histidine 118 lines the chlorophyll a pocket. Residues 125 to 141 (GFMLRQFELARSVQLRP) traverse the membrane as a helical segment. Glutamine 130 and asparagine 143 together coordinate pheophytin a. The helical transmembrane segment at 153–166 (VFVSVFLIYPLGQS) threads the bilayer. A chlorophyll a-binding site is contributed by histidine 198. Residues 208–228 (AALLCAIHGATVENTLFEDGD) traverse the membrane as a helical segment. A plastoquinone-binding residues include histidine 215 and phenylalanine 262. Histidine 215 provides a ligand contact to Fe cation. Histidine 269 is a Fe cation binding site. A helical membrane pass occupies residues 279–295 (GLWMSALGVVGLALNLR).

It belongs to the reaction center PufL/M/PsbA/D family. In terms of assembly, PSII is composed of 1 copy each of membrane proteins PsbA, PsbB, PsbC, PsbD, PsbE, PsbF, PsbH, PsbI, PsbJ, PsbK, PsbL, PsbM, PsbT, PsbX, PsbY, PsbZ, Psb30/Ycf12, at least 3 peripheral proteins of the oxygen-evolving complex and a large number of cofactors. It forms dimeric complexes. The D1/D2 heterodimer binds P680, chlorophylls that are the primary electron donor of PSII, and subsequent electron acceptors. It shares a non-heme iron and each subunit binds pheophytin, quinone, additional chlorophylls, carotenoids and lipids. There is also a Cl(-1) ion associated with D1 and D2, which is required for oxygen evolution. The PSII complex binds additional chlorophylls, carotenoids and specific lipids. is required as a cofactor.

The protein localises to the plastid. Its subcellular location is the chloroplast thylakoid membrane. It carries out the reaction 2 a plastoquinone + 4 hnu + 2 H2O = 2 a plastoquinol + O2. Functionally, photosystem II (PSII) is a light-driven water:plastoquinone oxidoreductase that uses light energy to abstract electrons from H(2)O, generating O(2) and a proton gradient subsequently used for ATP formation. It consists of a core antenna complex that captures photons, and an electron transfer chain that converts photonic excitation into a charge separation. The D1/D2 (PsbA/PsbD) reaction center heterodimer binds P680, the primary electron donor of PSII as well as several subsequent electron acceptors. D2 is needed for assembly of a stable PSII complex. In Nymphaea alba (White water-lily), this protein is Photosystem II D2 protein.